A 122-amino-acid chain; its full sequence is UPF0102 protein XOO3839 (122 aa).

Belongs to the UPF0102 family.

This is UPF0102 protein XOO3839 from Xanthomonas oryzae pv. oryzae (strain KACC10331 / KXO85).